The following is a 307-amino-acid chain: MAGRLAGFLMLLGLASQGPAPAYAGKMKVVEEPNTFGLNNPFLPQASRLQPKREPSAVSGPLHLFRLAGKCFSLVESTYKYEFCPFHNVTQHEQTFRWNAYSGILGIWHEWEIINNTFKGMWMTDGDSCHSRSRQSKVELTCGKINRLAHVSEPSTCVYALTFETPLVCHPHSLLVYPTLSEALQQRWDQVEQDLADELITPQGYEKLLRVLFEDAGYLKVPGETHPTQLAGGSKGLGLETLDNCRKAHAELSQEVQRLTSLLQQHGIPHTQPTETTHSQHLGQQLPIGAIAAEHLRSDPGLRGNIL.

The N-terminal stretch at 1–24 is a signal peptide; sequence MAGRLAGFLMLLGLASQGPAPAYA. Residues 69–171 form the MRH domain; it reads GKCFSLVEST…TFETPLVCHP (103 aa). The cysteines at positions 71 and 84 are disulfide-linked. Residues Asn-88 and Asn-115 are each glycosylated (N-linked (GlcNAc...) asparagine). 2 cysteine pairs are disulfide-bonded: Cys-129/Cys-157 and Cys-142/Cys-169. Positions 176 to 279 constitute a DMAP1-binding domain; that stretch reads VYPTLSEALQ…HTQPTETTHS (104 aa).

In terms of assembly, homodimer; disulfide-linked. Hexamer of two alpha (GNPTAB), two beta (GNPTAB) and two gamma (GNPTG) subunits; disulfide-linked. The alpha and/or the beta subunits of the enzyme constitute the catalytic subunits. Post-translationally, cys-245 mediates the formation of the interchain disulfide bond for formation of the homodimer. Cys-142, Cys-157 and Cys-169 are involved in intramolecular disulfide bonds formation. As to expression, widely expressed. Highly expressed in the liver, intestine, brain, thymus, testis and ovary.

Its subcellular location is the secreted. The protein localises to the golgi apparatus. In terms of biological role, non-catalytic subunit of the N-acetylglucosamine-1-phosphotransferase complex, an enzyme that catalyzes the formation of mannose 6-phosphate (M6P) markers on high mannose type oligosaccharides in the Golgi apparatus. Binds and presents the high mannose glycans of the acceptor to the catalytic alpha and beta subunits (GNPTAB). Enhances the rate of N-acetylglucosamine-1-phosphate transfer to the oligosaccharides of acid hydrolase acceptors. This is N-acetylglucosamine-1-phosphotransferase subunit gamma (Gnptg) from Mus musculus (Mouse).